A 239-amino-acid chain; its full sequence is MNIDIVISADHIDEKRLINKTVIIIDILRATSVITTAINNGCKKVIPVLTVEEAKDIAKNSKEDIILGGERNALKIDGFNFSNSPLEYTKKYVEGKTVVLSTTNGTRAINNSFNAKTILISALINSKATAKAIDKLNEDLIIINSGTNGQFSIDDFICSGYLIDCLYNIRKDLELSDIAKTAHYIYTNNKDIESFVKKATHYSRLKSLNLEKDLEYCFQKDIIDVVPQYKDGYIIKLNI.

This sequence belongs to the ComB family. Mg(2+) is required as a cofactor.

It carries out the reaction (2R)-O-phospho-3-sulfolactate + H2O = (2R)-3-sulfolactate + phosphate. This chain is Probable 2-phosphosulfolactate phosphatase, found in Clostridium botulinum (strain 657 / Type Ba4).